The sequence spans 253 residues: tRNA pseudouridine synthase A (253 aa).

The Nucleophile role is filled by D53. Substrate is bound at residue Y111.

This sequence belongs to the tRNA pseudouridine synthase TruA family. As to quaternary structure, homodimer.

It carries out the reaction uridine(38/39/40) in tRNA = pseudouridine(38/39/40) in tRNA. Formation of pseudouridine at positions 38, 39 and 40 in the anticodon stem and loop of transfer RNAs. The polypeptide is tRNA pseudouridine synthase A (Oceanobacillus iheyensis (strain DSM 14371 / CIP 107618 / JCM 11309 / KCTC 3954 / HTE831)).